Reading from the N-terminus, the 677-residue chain is DNA ligase (677 aa).

NAD(+) is bound by residues 32–36, 81–82, and Glu112; these read DSEYD and SL. The N6-AMP-lysine intermediate role is filled by Lys114. The NAD(+) site is built by Arg135, Glu171, Lys288, and Lys312. 4 residues coordinate Zn(2+): Cys416, Cys419, Cys434, and Cys439. Residues 598–677 form the BRCT domain; it reads YKPLPLSGVE…QEFINMLEQS (80 aa).

It belongs to the NAD-dependent DNA ligase family. LigA subfamily. Mg(2+) is required as a cofactor. It depends on Mn(2+) as a cofactor.

It catalyses the reaction NAD(+) + (deoxyribonucleotide)n-3'-hydroxyl + 5'-phospho-(deoxyribonucleotide)m = (deoxyribonucleotide)n+m + AMP + beta-nicotinamide D-nucleotide.. Its function is as follows. DNA ligase that catalyzes the formation of phosphodiester linkages between 5'-phosphoryl and 3'-hydroxyl groups in double-stranded DNA using NAD as a coenzyme and as the energy source for the reaction. It is essential for DNA replication and repair of damaged DNA. The polypeptide is DNA ligase (Dehalococcoides mccartyi (strain ATCC BAA-2266 / KCTC 15142 / 195) (Dehalococcoides ethenogenes (strain 195))).